Reading from the N-terminus, the 59-residue chain is Large ribosomal subunit protein bL32 (59 aa).

2 disordered regions span residues 1–23 (MAVQQNKKSPSKRGMHRSHDFLT) and 35–59 (EVHLRHHVSPNGYYRGKKVVKTKND). Positions 49 to 59 (RGKKVVKTKND) are enriched in basic residues.

This sequence belongs to the bacterial ribosomal protein bL32 family.

The chain is Large ribosomal subunit protein bL32 from Burkholderia ambifaria (strain MC40-6).